Here is a 465-residue protein sequence, read N- to C-terminus: Poly(A) polymerase I (465 aa).

Active-site residues include Asp80, Asp82, and Asp162. Residues 430–465 form a disordered region; that stretch reads APPEQKGMLNELDDDPAPRRRRSRPRKRAPRREGTV. Residues 448–459 show a composition bias toward basic residues; sequence RRRRSRPRKRAP.

It belongs to the tRNA nucleotidyltransferase/poly(A) polymerase family.

The enzyme catalyses RNA(n) + ATP = RNA(n)-3'-adenine ribonucleotide + diphosphate. Its function is as follows. Adds poly(A) tail to the 3' end of many RNAs, which usually targets these RNAs for decay. Plays a significant role in the global control of gene expression, through influencing the rate of transcript degradation, and in the general RNA quality control. The sequence is that of Poly(A) polymerase I from Salmonella typhi.